We begin with the raw amino-acid sequence, 1508 residues long: uncharacterized protein (1508 aa).

Positions 149 to 267 (ARRQQWRLRR…ARSLQEHRAT (119 aa)) form a coiled coil. 5 disordered regions span residues 248-268 (ERSE…RATE), 345-403 (SQDW…LAGS), 536-575 (FLKK…GKNL), 725-754 (GLEE…SQEH), and 868-916 (EAKS…AEPW). The segment covering 868–881 (EAKSKESGEGDKPG) has biased composition (basic and acidic residues). Residues 972–1034 (ISRLERDNHR…KGNLGQLQKA (63 aa)) are a coiled coil. Disordered regions lie at residues 1158 to 1186 (LAAG…LVWR) and 1204 to 1246 (KEAH…EEDP). Residues 1163–1172 (TGPSTGTGNS) show a composition bias toward polar residues. Residues 1204–1215 (KEAHLEKEEKRP) are compositionally biased toward basic and acidic residues. Over residues 1220-1230 (AQGQALSSLSN) the composition is skewed to polar residues. Residues 1271–1302 (HQASLDEATRLQEELQAKLEELQKKQHEAKLA) are a coiled coil.

This is an uncharacterized protein from Homo sapiens (Human).